The sequence spans 226 residues: Transmembrane emp24 domain-containing protein 5 (226 aa).

Residues methionine 1–glycine 24 form the signal peptide. At phenylalanine 25–asparagine 193 the chain is on the lumenal side. The region spanning lysine 42–leucine 123 is the GOLD domain. The helical transmembrane segment at phenylalanine 194–leucine 214 threads the bilayer. Topologically, residues lysine 215–threonine 226 are cytoplasmic. The Mediates export from ER signature appears at leucine 217–phenylalanine 218.

This sequence belongs to the EMP24/GP25L family. As to quaternary structure, interacts with TMED9 and TMED10.

The protein localises to the endoplasmic reticulum membrane. The protein resides in the golgi apparatus. It localises to the cis-Golgi network membrane. It is found in the endoplasmic reticulum-Golgi intermediate compartment membrane. Functionally, potential role in vesicular protein trafficking, mainly in the early secretory pathway. Required for the maintenance of the Golgi apparatus; involved in protein exchange between Golgi stacks during assembly. Probably not required for COPI-vesicle-mediated retrograde transport. This Bos taurus (Bovine) protein is Transmembrane emp24 domain-containing protein 5 (TMED5).